Consider the following 198-residue polypeptide: Nucleoid occlusion factor SlmA (198 aa).

In terms of domain architecture, HTH tetR-type spans 10–70; the sequence is NRREEILQSL…SLIEFIEDSL (61 aa). A DNA-binding region (H-T-H motif) is located at residues 33–52; it reads TTAKLAASVGVSEAALYRHF. The stretch at 117 to 144 forms a coiled coil; it reads EQDRLQGRINQLFERIEAQLRQVLREKR.

This sequence belongs to the nucleoid occlusion factor SlmA family. As to quaternary structure, homodimer. Interacts with FtsZ.

It is found in the cytoplasm. Its subcellular location is the nucleoid. Functionally, required for nucleoid occlusion (NO) phenomenon, which prevents Z-ring formation and cell division over the nucleoid. Acts as a DNA-associated cell division inhibitor that binds simultaneously chromosomal DNA and FtsZ, and disrupts the assembly of FtsZ polymers. SlmA-DNA-binding sequences (SBS) are dispersed on non-Ter regions of the chromosome, preventing FtsZ polymerization at these regions. In Escherichia coli O127:H6 (strain E2348/69 / EPEC), this protein is Nucleoid occlusion factor SlmA.